The following is a 963-amino-acid chain: MAVAPRLFGGLCFRFRDQNPEVAVEGRLPISHSCVGCRRERTAMATVAANPAAAAAAVAAAAAVTEDREPQHEELPGLDSQWRQIENGESGRERPLRAGESWFLVEKHWYKQWEAYVQGGDQDSSTFPGCINNATLFQDEINWRLKEGLVEGEDYVLLPAAAWHYLVSWYGLEHGQPPIERKVIELPNIQKVEVYPVELLLVRHNDLGKSHTVQFSHTDSIGLVLRTARERFLVEPQEDTRLWAKNSEGSLDRLYDTHITVLDAALETGQLIIMETRKKDGTWPSAQLHVMNNNMSEEDEDFKGQPGICGLTNLGNTCFMNSALQCLSNVPQLTEYFLNNCYLEELNFRNPLGMKGEIAEAYADLVKQAWSGHHRSIVPHVFKNKVGHFASQFLGYQQHDSQELLSFLLDGLHEDLNRVKKKEYVELCDAAGRPDQEVAQEAWQNHKRRNDSVIVDTFHGLFKSTLVCPDCGNVSVTFDPFCYLSVPLPISHKRVLEVFFIPMDPRRKPEQHRLVVPKKGKISDLCVALSKHTGISPERMMVADVFSHRFYKLYQLEEPLSSILDRDDIFVYEVSGRIEAIEGSREDIVVPVYLRERTPARDYNNSYYGLMLFGHPLLVSVPRDRFTWEGLYNVLMYRLSRYVTKPNSDDEDDGDEKEDDEEDKDDVPGPSTGGSLRDPEPEQAGPSSGVTNRCPFLLDNCLGTSQWPPRRRRKQLFTLQTVNSNGTSDRTTSPEEVHAQPYIAIDWEPEMKKRYYDEVEAEGYVKHDCVGYVMKKAPVRLQECIELFTTVETLEKENPWYCPSCKQHQLATKKLDLWMLPEILIIHLKRFSYTKFSREKLDTLVEFPIRDLDFSEFVIQPQNESNPELYKYDLIAVSNHYGGMRDGHYTTFACNKDSGQWHYFDDNSVSPVNENQIESKAAYVLFYQRQDVARRLLSPAGSSGAPASPACSSPPSSEFMDVN.

The segment at 64–93 (VTEDREPQHEELPGLDSQWRQIENGESGRE) is disordered. Over residues 65–75 (TEDREPQHEEL) the composition is skewed to basic and acidic residues. Positions 76–184 (PGLDSQWRQI…GQPPIERKVI (109 aa)) constitute a DUSP domain. An N6-acetyllysine modification is found at K245. The 622-residue stretch at 309–930 (CGLTNLGNTC…AAYVLFYQRQ (622 aa)) folds into the USP domain. C318 functions as the Nucleophile in the catalytic mechanism. Disordered regions lie at residues 644–691 (TKPN…SGVT) and 716–735 (LFTL…TSPE). Phosphoserine is present on S648. Residues 649-665 (DDEDDGDEKEDDEEDKD) are compositionally biased toward acidic residues. Residues 717 to 731 (FTLQTVNSNGTSDRT) show a composition bias toward polar residues. Phosphoserine is present on S733. The Proton acceptor role is filled by H888. Residues 938–957 (SPAGSSGAPASPACSSPPSS) are compositionally biased toward low complexity. The segment at 938–963 (SPAGSSGAPASPACSSPPSSEFMDVN) is disordered. At S948 the chain carries Phosphoserine.

Belongs to the peptidase C19 family. In terms of assembly, monomer. Associated component of the Polycomb group (PcG) multiprotein PRC1-like complex. Interacts with RANBP9/RANBPM. Interacts with BRCA2. Interacts with CHUK/IKKA. Interacts with NFKBIA. Interacts with SPRY3, RAE1, MYCBP2/PAM, and KCTD6. As to quaternary structure, (Microbial infection) Interacts with papilloma virus protein 16E7.

It is found in the nucleus. It localises to the cytoplasm. Its subcellular location is the chromosome. The enzyme catalyses Thiol-dependent hydrolysis of ester, thioester, amide, peptide and isopeptide bonds formed by the C-terminal Gly of ubiquitin (a 76-residue protein attached to proteins as an intracellular targeting signal).. Protease that can remove conjugated ubiquitin from target proteins and polyubiquitin chains. Inhibits the degradation of target proteins by the proteasome. Cleaves preferentially 'Lys-6' and 'Lys-63'-linked ubiquitin chains. Has lower activity with 'Lys-11' and 'Lys-33'-linked ubiquitin chains, and extremely low activity with 'Lys-27', 'Lys-29' and 'Lys-48'-linked ubiquitin chains (in vitro). Plays a role in the regulation of pathways leading to NF-kappa-B activation. Plays a role in the regulation of DNA repair after double-stranded DNA breaks. Acts as a chromatin regulator via its association with the Polycomb group (PcG) multiprotein PRC1-like complex; may act by deubiquitinating components of the PRC1-like complex. Promotes cell proliferation by deubiquitinating phosphorylated E2F1. This is Ubiquitin carboxyl-terminal hydrolase 11 (USP11) from Homo sapiens (Human).